The following is a 474-amino-acid chain: PTS system N-acetylmuramic acid-specific EIIBC component (474 aa).

A PTS EIIB type-1 domain is found at 1 to 89 (MAKEISSELL…SELLGEAPVQ (89 aa)). Residues 1–123 (MAKEISSELL…LAKFATIFTP (123 aa)) are Cytoplasmic-facing. Cysteine 29 (phosphocysteine intermediate; for EIIB activity) is an active-site residue. The 360-residue stretch at 115–474 (AKFATIFTPL…LFGCRNVNLD (360 aa)) folds into the PTS EIIC type-1 domain. Residues 124-144 (LIPGFIAAGLLLGIATLIATV) form a helical membrane-spanning segment. Over 145-157 (MHVPADAQGTLPD) the chain is Periplasmic. The chain crosses the membrane as a helical span at residues 158–178 (ALNFMKVFSKGLFTFLVILVG). Over 179 to 180 (YN) the chain is Cytoplasmic. A helical membrane pass occupies residues 181–201 (AAQAFGGTGVNGAIIAALFLL). Residues 202–217 (GYNPAATTGYYAGFHD) are Periplasmic-facing. The chain crosses the membrane as a helical span at residues 218–238 (FFGLPIDPRGNIIGVLIAAWA). Topologically, residues 239–260 (CARIEGMVRRFMPDDLDMLLTS) are cytoplasmic. The helical transmembrane segment at 261 to 281 (LITLLITATLAYLIIMPLGGW) threads the bilayer. The Periplasmic segment spans residues 282–301 (LFEGMSWLFMHLNSNPLGCA). The chain crosses the membrane as a helical span at residues 302–322 (VLAGLFLIAVVFGVHQGFIPV). The Cytoplasmic segment spans residues 323-334 (YLALMDSQGFNS). A helical transmembrane segment spans residues 335-355 (LFPILSMAGAGQVGAALALYW). Residues 356 to 368 (RAQPHSALRSQVR) are Periplasmic-facing. The chain crosses the membrane as a helical span at residues 369–389 (GAIIPGLLGVGEPLIYGVTLP). Residues 390-393 (RMKP) are Cytoplasmic-facing. A helical membrane pass occupies residues 394-414 (FITACLGGAAGGLFIGLIAWW). Topologically, residues 415 to 440 (GLPMGLNSAFGPSGLVALPLMTSAQG) are periplasmic. The chain crosses the membrane as a helical span at residues 441–461 (ILPAMAVYAGGILVAWVCGFI). Residues 462-474 (FTTLFGCRNVNLD) are Cytoplasmic-facing.

It localises to the cell inner membrane. It carries out the reaction N-acetyl-beta-D-muramate(out) + N(pros)-phospho-L-histidyl-[protein] = N-acetyl-beta-D-muramate 6-phosphate(in) + L-histidyl-[protein]. In terms of biological role, the phosphoenolpyruvate-dependent sugar phosphotransferase system (sugar PTS), a major carbohydrate active transport system, catalyzes the phosphorylation of incoming sugar substrates concomitantly with their translocation across the cell membrane. This system is involved in N-acetylmuramic acid (MurNAc) transport, yielding cytoplasmic MurNAc-6-P. Is also able to take up anhydro-N-acetylmuramic acid (anhMurNAc), but cannot phosphorylate the carbon 6, probably because of the 1,6-anhydro ring. This Escherichia coli O157:H7 protein is PTS system N-acetylmuramic acid-specific EIIBC component (murP).